The primary structure comprises 590 residues: L-gulonolactone oxidase 5 (590 aa).

The N-terminal stretch at 1–31 (MAFGYSPSYCSFWRTLLGLYCLFTLVHTVIS) is a signal peptide. One can recognise an FAD-binding PCMH-type domain in the interval 60–242 (STCRAANVAY…SQVTFELQPM (183 aa)).

Belongs to the oxygen-dependent FAD-linked oxidoreductase family. FAD is required as a cofactor.

The enzyme catalyses L-gulono-1,4-lactone + O2 = L-ascorbate + H2O2 + H(+). The protein operates within cofactor biosynthesis; L-ascorbate biosynthesis. Functionally, catalyzes the oxidation of L-gulono-1,4-lactone to ascorbic acid. L-gulono-1,4-lactone is oxidized to hydrogen peroxide and L-xylo-hexulonolactone which spontaneously isomerizes to L-ascorbate. In Arabidopsis thaliana (Mouse-ear cress), this protein is L-gulonolactone oxidase 5.